Here is a 702-residue protein sequence, read N- to C-terminus: Cytolytic toxin-beta (702 aa).

Residues 2–264 (PSDILVVAAL…EAPQLMADSS (263 aa)) are structural MACPF/CDC pore-forming domain. 3 N-linked (GlcNAc...) asparagine glycosylation sites follow: N94, N101, and N286. A structural FAT domain region spans residues 265-387 (TPILRKVRNT…DIIEEAKHKV (123 aa)). The interval 388–515 (VLSKSQMARE…PRIPPVETIQ (128 aa)) is thioredoxin (THX) domain. Residues 504 to 702 (SNPRIPPVET…ANGQIKLKGE (199 aa)) enclose the B30.2/SPRY domain.

The protein belongs to the SNTX/VTX toxin family. Heterodimer of alpha and beta subunits; non-covalently linked. Also associates into tetramers or even higher aggregates. Post-translationally, intrachain disulfide bonds may be present in the heterodimer. As to expression, expressed by the venom gland.

The protein localises to the secreted. Functionally, this heterodimer induces potent hemolytic activities (when tested on rabbit erythrocytes, EC(50)=25-56 ng/mL) due to its ability to form pores in the cell membrane. The pore may be composed of 10 alpha/beta heterodimers. The toxin shows cardiovascular effects that include a vasorelaxant action that may involve the L-arginine-nitric oxid synthase pathway. In addition, it displays edema-inducing activities, increases vascular permeability. It also shows myotoxic activities and interferes irreversibly with neuromuscular function. It also induces irreversible platelet aggregation in rabbit or rat (but not in human or mouse) whole blood. In addition, it has been observed to increase spontaneous quantal acetylcholine release from isolated frog cutaneous pectoris motor endings. The sequence is that of Cytolytic toxin-beta from Scorpaena plumieri (Spotted scorpionfish).